The primary structure comprises 564 residues: Cytochrome c oxidase subunit 1 (564 aa).

The interval 1–23 (MTAVAPRLENYAEPTRPAPTGGA) is disordered. 7 consecutive transmembrane segments (helical) span residues 43–63 (MMYI…ALLI), 83–103 (LFTL…VWGF), 122–142 (LNAF…AGFL), 171–191 (FWII…VNMI), 214–234 (IFVA…AALG), 259–279 (LFWF…FGIV), and 292–312 (FGYI…MAVW). His-87 contacts Fe(II)-heme a. Cu cation-binding residues include His-265 and Tyr-269. Positions 265-269 (HPEVY) form a cross-link, 1'-histidyl-3'-tyrosine (His-Tyr). 2 residues coordinate Cu cation: His-314 and His-315. 2 consecutive transmembrane segments (helical) span residues 316 to 336 (MFVT…LISV) and 360 to 380 (MTWT…GIML). His-398 serves as a coordination point for heme a3. The next 3 helical transmembrane spans lie at 399-419 (FHYT…YFWF), 434-454 (IHFW…HWVG), and 477-497 (ISTV…WNVF). Residue His-400 coordinates Fe(II)-heme a.

This sequence belongs to the heme-copper respiratory oxidase family. In terms of assembly, associates with subunits II, III and IV to form cytochrome c oxidase. The cofactor is Cu(2+). Heme is required as a cofactor.

The protein resides in the cell membrane. The catalysed reaction is 4 Fe(II)-[cytochrome c] + O2 + 8 H(+)(in) = 4 Fe(III)-[cytochrome c] + 2 H2O + 4 H(+)(out). The protein operates within energy metabolism; oxidative phosphorylation. Its function is as follows. Cytochrome c oxidase is the component of the respiratory chain that catalyzes the reduction of oxygen to water. Subunits 1-3 form the functional core of the enzyme complex. CO I is the catalytic subunit of the enzyme. Electrons originating in cytochrome c are transferred via the copper A center of subunit 2 and heme A of subunit 1 to the bimetallic center formed by heme A3 and copper B. The chain is Cytochrome c oxidase subunit 1 (ctaD) from Corynebacterium diphtheriae (strain ATCC 700971 / NCTC 13129 / Biotype gravis).